Here is a 287-residue protein sequence, read N- to C-terminus: tRNA selenocysteine 1-associated protein 1 (287 aa).

2 RRM domains span residues 3-86 (ASLW…YATY) and 96-175 (YSLF…VAIP).

It belongs to the RRM TRSPAP family. Component of the tRNA(Sec) complex composed at least of EEFSEC, SECISBP2, SEPHS1, SEPSECS, TRNAU1AP and tRNA(Sec). Associates with mRNP and/or polysomes. Found in a complex with tRNA(Sec). Interacts with SEPSECS. As to expression, ubiquitous.

It is found in the nucleus. It localises to the cytoplasm. Involved in the early steps of selenocysteine biosynthesis and tRNA(Sec) charging to the later steps resulting in the cotranslational incorporation of selenocysteine into selenoproteins. Stabilizes the SECISBP2, EEFSEC and tRNA(Sec) complex. May be involved in the methylation of tRNA(Sec). Enhances efficiency of selenoproteins synthesis. The chain is tRNA selenocysteine 1-associated protein 1 (Trnau1ap) from Rattus norvegicus (Rat).